Reading from the N-terminus, the 362-residue chain is N-alpha-acetyltransferase 30 (362 aa).

Residues 1–20 (MAEVPPGPSSLLPPPAPPAP) are compositionally biased toward pro residues. Disordered regions lie at residues 1-26 (MAEV…VEPR), 38-88 (CSED…NGLI), and 113-182 (ATTA…EEDE). Residues Ser-39 and Ser-55 each carry the phosphoserine modification. The segment covering 39-48 (SEDEEDDEEH) has biased composition (acidic residues). Thr-117 bears the Phosphothreonine mark. The segment covering 149 to 165 (AVPSPVEAAAASDPAAA) has biased composition (low complexity). Ser-152 carries the post-translational modification Phosphoserine. Positions 173 to 182 (TEQEEEEEDE) are enriched in acidic residues. A phosphoserine mark is found at Ser-190, Ser-196, and Ser-199. Residues 214–362 (RYVRYESELQ…DALRLKLWLR (149 aa)) enclose the N-acetyltransferase domain. An N6-acetyllysine modification is found at Lys-233.

The protein belongs to the acetyltransferase family. MAK3 subfamily. In terms of assembly, component of the N-terminal acetyltransferase C (NatC) complex, which is composed of NAA35, NAA38 and NAA30.

It is found in the cytoplasm. The protein localises to the nucleus. The catalysed reaction is N-terminal L-methionyl-L-leucyl-[protein] + acetyl-CoA = N-terminal N(alpha)-acetyl-L-methionyl-L-leucyl-[protein] + CoA + H(+). The enzyme catalyses N-terminal L-methionyl-L-isoleucyl-[protein] + acetyl-CoA = N-terminal N(alpha)-acetyl-L-methionyl-L-isoleucyl-[protein] + CoA + H(+). It catalyses the reaction N-terminal L-methionyl-L-phenylalanyl-[protein] + acetyl-CoA = N-terminal N(alpha)-acetyl-L-methionyl-L-phenylalanyl-[protein] + CoA + H(+). It carries out the reaction N-terminal L-methionyl-L-tryptophyl-[protein] + acetyl-CoA = N-terminal N(alpha)-acetyl-L-methionyl-L-tryptophyl-[protein] + CoA + H(+). The catalysed reaction is N-terminal L-methionyl-L-tyrosyl-[protein] + acetyl-CoA = N-terminal N(alpha)-acetyl-L-methionyl-L-tyrosyl-[protein] + CoA + H(+). In terms of biological role, catalytic subunit of the N-terminal acetyltransferase C (NatC) complex. Catalyzes acetylation of the N-terminal methionine residues of peptides beginning with Met-Leu-Ala and Met-Leu-Gly. N-terminal acetylation protects proteins from ubiquitination and degradation by the N-end rule pathway. Necessary for the lysosomal localization and function of ARL8B sugeesting that ARL8B is a NatC substrate. The polypeptide is N-alpha-acetyltransferase 30 (NAA30) (Homo sapiens (Human)).